The sequence spans 238 residues: 2-C-methyl-D-erythritol 4-phosphate cytidylyltransferase (238 aa).

The protein belongs to the IspD/TarI cytidylyltransferase family. IspD subfamily.

It carries out the reaction 2-C-methyl-D-erythritol 4-phosphate + CTP + H(+) = 4-CDP-2-C-methyl-D-erythritol + diphosphate. It participates in isoprenoid biosynthesis; isopentenyl diphosphate biosynthesis via DXP pathway; isopentenyl diphosphate from 1-deoxy-D-xylulose 5-phosphate: step 2/6. Its function is as follows. Catalyzes the formation of 4-diphosphocytidyl-2-C-methyl-D-erythritol from CTP and 2-C-methyl-D-erythritol 4-phosphate (MEP). In Shewanella amazonensis (strain ATCC BAA-1098 / SB2B), this protein is 2-C-methyl-D-erythritol 4-phosphate cytidylyltransferase.